The sequence spans 100 residues: Small ribosomal subunit protein uS14c (100 aa).

The protein belongs to the universal ribosomal protein uS14 family. Part of the 30S ribosomal subunit.

It is found in the plastid. The protein resides in the chloroplast. Binds 16S rRNA, required for the assembly of 30S particles. The chain is Small ribosomal subunit protein uS14c from Psilotum nudum (Whisk fern).